Consider the following 454-residue polypeptide: Histidine--tRNA ligase (454 aa).

This sequence belongs to the class-II aminoacyl-tRNA synthetase family. Homodimer.

Its subcellular location is the cytoplasm. It carries out the reaction tRNA(His) + L-histidine + ATP = L-histidyl-tRNA(His) + AMP + diphosphate + H(+). This chain is Histidine--tRNA ligase, found in Bacteroides fragilis (strain YCH46).